Consider the following 642-residue polypeptide: Transmembrane 9 superfamily member 4 (642 aa).

Positions 1-23 (MATAMDWLPWSLLLFSLMCETSA) are cleaved as a signal peptide. Residues 24 to 281 (FYVPGVAPIN…TMSDVQIHWF (258 aa)) are Extracellular-facing. A helical membrane pass occupies residues 282–302 (SIINSVVVVFFLSGILSMIII). Residues 303-346 (RTLRKDIANYNKEDDIEDTMEESGWKLVHGDVFRPPQYPMILSS) lie on the Cytoplasmic side of the membrane. The residue at position 312 (Tyr312) is a Phosphotyrosine. Residues 347 to 367 (LLGSGIQLFCMILIVIFVAML) traverse the membrane as a helical segment. Residues 368 to 376 (GMLSPSSRG) are Extracellular-facing. The helical transmembrane segment at 377 to 397 (ALMTTACFLFMFMGVFGGFSA) threads the bilayer. Over 398-416 (GRLYRTLKGHRWKKGAFCT) the chain is Cytoplasmic. The chain crosses the membrane as a helical span at residues 417–437 (ATLYPGVVFGICFVLNCFIWG). Residues 438 to 449 (KHSSGAVPFPTM) are Extracellular-facing. The helical transmembrane segment at 450 to 470 (VALLCMWFGISLPLVYLGYYF) threads the bilayer. Residues 471 to 501 (GFRKQPYDNPVRTNQIPRQIPEQRWYMNRFV) are Cytoplasmic-facing. Residues 502–522 (GILMAGILPFGAMFIELFFIF) traverse the membrane as a helical segment. Residues 523–535 (SAIWENQFYYLFG) are Extracellular-facing. A helical transmembrane segment spans residues 536–556 (FLFLVFIILVVSCSQISIVMV). The Cytoplasmic portion of the chain corresponds to 557-570 (YFQLCAEDYRWWWR). Residues 571 to 591 (NFLVSGGSAFYVLVYAIFYFV) form a helical membrane-spanning segment. Residues 592-598 (NKLDIVE) are Extracellular-facing. The chain crosses the membrane as a helical span at residues 599-619 (FIPSLLYFGYTALMVLSFWLL). The Cytoplasmic portion of the chain corresponds to 620–642 (TGTIGFYAAYMFVRKIYAAVKID).

This sequence belongs to the nonaspanin (TM9SF) (TC 9.A.2) family. As to quaternary structure, interacts with ATP6V1H in colon cancer cells. Highly expressed in metastatic melanoma cells whereas it is undetectable in primary melanoma cells, healthy skin tissues and peripheral blood lymphocytes. Expressed in CD34(+) hematopoietic progenitor cells and during monocyte and granulocyte differentiation. Overexpressed in acute myeloid leukemia, in particular in those displaying granulocytic differentiation (at protein level).

The protein resides in the membrane. The protein localises to the golgi apparatus. Its subcellular location is the early endosome. Associates with proteins harboring glycine-rich transmembrane domains and ensures their efficient localization to the cell surface. Regulates the assembly and activity of V-ATPase in colon cancer cells via its interaction with V-type proton ATPase subunit H (ATP6V1H) and contributes to V-ATPase-mediated pH alterations in cancer cells which play an important role in drug resistance and invasiveness of colon cancer cells. Plays an important role in an atypical phagocytic activity of metastatic melanoma cells called cannibalism and is involved in the pH regulation of the intracellular vesicles in tumor cells. This chain is Transmembrane 9 superfamily member 4 (TM9SF4), found in Homo sapiens (Human).